The chain runs to 157 residues: MRKVKPARKLGRTSAHRKATLSNLSTQLLIHKRIETTEAKAKETRKVVEKIITKARKGTHHAQREVFGALRDKEAVRELFEEIVGRIGSRNGGYTRIIKLAPRYGDAAKMAVIELVDYAEAPSAAPVVSKQDRAKRVKGSKKAESRSQENEGGDAAE.

Residues 124–157 form a disordered region; the sequence is AAPVVSKQDRAKRVKGSKKAESRSQENEGGDAAE.

The protein belongs to the bacterial ribosomal protein bL17 family. As to quaternary structure, part of the 50S ribosomal subunit. Contacts protein L32.

The chain is Large ribosomal subunit protein bL17 from Chlorobaculum tepidum (strain ATCC 49652 / DSM 12025 / NBRC 103806 / TLS) (Chlorobium tepidum).